A 532-amino-acid chain; its full sequence is Transcriptional regulatory protein RtcR (532 aa).

The region spanning 186-424 (IATRNPHFNR…LSASVTRMAT (239 aa)) is the Sigma-54 factor interaction domain. Residues 215-222 (GPTGAGKS) and 281-290 (ANGGMLFLDE) contribute to the ATP site. Positions 485–504 (KSLSAAGRQLFDVSRQGKAS) form a DNA-binding region, H-T-H motif.

Functionally, transcriptional repressor of the rtcAB genes. Interacts with sigma-54. The polypeptide is Transcriptional regulatory protein RtcR (rtcR) (Escherichia coli (strain K12)).